The chain runs to 233 residues: Endonuclease V (233 aa).

Mg(2+)-binding residues include Asp-48 and Asp-116.

It belongs to the endonuclease V family. Mg(2+) serves as cofactor.

Its subcellular location is the cytoplasm. It carries out the reaction Endonucleolytic cleavage at apurinic or apyrimidinic sites to products with a 5'-phosphate.. DNA repair enzyme involved in the repair of deaminated bases. Selectively cleaves double-stranded DNA at the second phosphodiester bond 3' to a deoxyinosine leaving behind the intact lesion on the nicked DNA. The sequence is that of Endonuclease V from Streptomyces coelicolor (strain ATCC BAA-471 / A3(2) / M145).